A 243-amino-acid polypeptide reads, in one-letter code: Pyrimidodiazepine synthase (243 aa).

Residues 20 to 102 (GILRLYSMRF…YLDEQYPLRP (83 aa)) enclose the GST N-terminal domain. C30 serves as the catalytic Nucleophile. Residues K57, V70, and 86 to 87 (ES) each bind glutathione. Residues 107–230 (DPLKKVQDKL…VQAEFLRTRS (124 aa)) form the GST C-terminal domain.

The protein belongs to the GST superfamily. Omega family. In terms of assembly, homodimer.

It carries out the reaction 2-amino-6-acetyl-3,7,8,9-tetrahydro-3H-pyrimido[4,5-b][1,4]diazepin-4-one + glutathione disulfide + H2O = 6-pyruvoyl-5,6,7,8-tetrahydropterin + 2 glutathione. In terms of biological role, mediates the conversion of 2-amino-4-oxo-6-pyruvoyl-5,6,7,8-tetrahydropteridine (6-PTP; also named 6-pyruvoyltetrahydropterin) to 2-amino-6-acetyl-3,7,8,9-tetrahydro-3H-pyrimido(4,5-b)[1,4]diazepin-4-one (pyrimidodiazepine or PDA), a key intermediate in red eye pigment drosopterin biosynthesis. The polypeptide is Pyrimidodiazepine synthase (Drosophila melanogaster (Fruit fly)).